The chain runs to 352 residues: Respiratory nitrate reductase subunit beta (352 aa).

Residues 20-48 enclose the 4Fe-4S ferredoxin-type 1 domain; sequence VAMVMDLNKCIGCQTCTVACKSLWTEGGG. Positions 29, 32, 35, and 39 each coordinate [4Fe-4S] cluster. 2 disordered regions span residues 63 to 95 and 111 to 131; these read KGYP…KEDY and SDRP…DEDQ. Over residues 78-95 the composition is skewed to basic and acidic residues; that stretch reads SSEHKERKPGQIPDKEDY. 4Fe-4S ferredoxin-type domains lie at 139-170 and 172-201; these read SYYF…KREE and GIVL…YNAT. [4Fe-4S] cluster is bound by residues C148, C151, and C156. Positions 160, 181, and 187 each coordinate [3Fe-4S] cluster. 5 residues coordinate [4Fe-4S] cluster: C191, C208, C211, C229, and C233.

As to quaternary structure, probable multiprotein complex; a catalytic heterodimer of an alpha and beta chain is proposed to associate with additional subunits involved in membrane attachment and electron transfer. [4Fe-4S] cluster is required as a cofactor. [3Fe-4S] cluster serves as cofactor.

The protein localises to the cell membrane. The catalysed reaction is nitrate + a quinol = a quinone + nitrite + H2O. With respect to regulation, inhibited by cyanide, azide and antimycin A. Enzyme stability is not dependent on salt concentration. Its function is as follows. The respiratory membrane-bound nitrate reductase enzyme complex plays a role in generation of metabolic energy by using nitrate as a terminal electron acceptor during anaerobic conditions. The beta chain is an electron transfer unit containing four cysteine clusters involved in the formation of iron-sulfur centers. This is Respiratory nitrate reductase subunit beta (narH) from Haloferax mediterranei (strain ATCC 33500 / DSM 1411 / JCM 8866 / NBRC 14739 / NCIMB 2177 / R-4) (Halobacterium mediterranei).